The sequence spans 81 residues: Putative membrane protein insertion efficiency factor (81 aa).

Residues 61-81 are disordered; sequence NPGGYDPVPPIPTSRSSSMAE.

The protein belongs to the UPF0161 family.

Its subcellular location is the cell inner membrane. Its function is as follows. Could be involved in insertion of integral membrane proteins into the membrane. This is Putative membrane protein insertion efficiency factor from Pseudomonas fluorescens (strain Pf0-1).